A 250-amino-acid chain; its full sequence is Acetylglutamate kinase (250 aa).

Residues 41–42 (GG), Arg-63, and Asn-156 contribute to the substrate site.

The protein belongs to the acetylglutamate kinase family. ArgB subfamily.

The protein resides in the cytoplasm. It carries out the reaction N-acetyl-L-glutamate + ATP = N-acetyl-L-glutamyl 5-phosphate + ADP. It functions in the pathway amino-acid biosynthesis; L-arginine biosynthesis; N(2)-acetyl-L-ornithine from L-glutamate: step 2/4. Its function is as follows. Catalyzes the ATP-dependent phosphorylation of N-acetyl-L-glutamate. This is Acetylglutamate kinase from Listeria monocytogenes serovar 1/2a (strain ATCC BAA-679 / EGD-e).